We begin with the raw amino-acid sequence, 513 residues long: GMP synthase [glutamine-hydrolyzing] (513 aa).

One can recognise a Glutamine amidotransferase type-1 domain in the interval 8–198; the sequence is MILVLDFGSQ…VFGVCECVGE (191 aa). The active-site Nucleophile is the Cys85. Active-site residues include His172 and Glu174. The GMPS ATP-PPase domain occupies 199–388; that stretch reads WSMENFIEIE…LGIPDEIVWR (190 aa). 226-232 is an ATP binding site; it reads SGGVDSS.

In terms of assembly, homodimer.

It carries out the reaction XMP + L-glutamine + ATP + H2O = GMP + L-glutamate + AMP + diphosphate + 2 H(+). It participates in purine metabolism; GMP biosynthesis; GMP from XMP (L-Gln route): step 1/1. In terms of biological role, catalyzes the synthesis of GMP from XMP. This Bacillus licheniformis (strain ATCC 14580 / DSM 13 / JCM 2505 / CCUG 7422 / NBRC 12200 / NCIMB 9375 / NCTC 10341 / NRRL NRS-1264 / Gibson 46) protein is GMP synthase [glutamine-hydrolyzing].